A 293-amino-acid chain; its full sequence is LysM and putative peptidoglycan-binding domain-containing protein 4 (293 aa).

The Extracellular segment spans residues 1–214 (MRQKEVLAKS…VADGADCGIQ (214 aa)). The tract at residues 28-65 (FNNGSGDSGDSSEEESHQVVLRPRGKEHQKNSSQRPGA) is disordered. An N-linked (GlcNAc...) asparagine glycan is attached at asparagine 30. The LysM domain maps to 71–115 (LQRELAQEDSLNKLALQYGCKVADIKKANNFIREQDLYALKSIKI). The chain crosses the membrane as a helical span at residues 215 to 235 (WWNAVFLMLLIGIVLPVFYLV). Residues 236-293 (YFKIQATGEPSNGLNATVVPNGSMTLSPVPGQAPRLAIPVPTLPASDSQVSPTTQAGA) lie on the Cytoplasmic side of the membrane.

It localises to the membrane. The protein is LysM and putative peptidoglycan-binding domain-containing protein 4 (Lysmd4) of Mus musculus (Mouse).